Consider the following 821-residue polypeptide: Zinc finger protein 41 (821 aa).

A disordered region spans residues 1-55; it reads MAANGDSPPWSPALAAEGRGSSCEVRRERTPEARIHSVKRYPDLSPGPKGRSSAD. Over residues 24 to 35 the composition is skewed to basic and acidic residues; the sequence is EVRRERTPEARI. In terms of domain architecture, KRAB spans 69 to 140; that stretch reads VSFEDVTVDF…EGEAPHQSCS (72 aa). A Glycyl lysine isopeptide (Lys-Gly) (interchain with G-Cter in SUMO2) cross-link involves residue Lys120. The C2H2-type 1 zinc-finger motif lies at 313-335; it reads YVCTECVMGFTQKSHLFEHQRIH. The segment at 341 to 364 adopts a C2H2-type 2; degenerate zinc-finger fold; it reads RECDKSNKVFPQKPQVDVHPSVYT. C2H2-type zinc fingers lie at residues 369–391, 397–419, 425–447, 453–475, 481–503, 509–531, 537–559, 565–587, 593–615, and 621–643; these read YLCTQCGKVFTLKSNLITHQKIH, YKCSECGKAFFQRSDLFRHLRIH, YECSECGKGFSQNSDLSIHQKTH, YECNECGKAFTRKSALRMHQRIH, YVCADCGKAFIQKSHFNTHQRIH, YECSDCGKSFTKKSQLHVHQRIH, YICTECGKVFTHRTNLTTHQKTH, YMCAECGKAFTDQSNLIKHQKTH, YKCNGCGKAFIWKSRLKIHQKSH, and YECKDCGKAFIQKSTLSVHQRIH. Lys647 participates in a covalent cross-link: Glycyl lysine isopeptide (Lys-Gly) (interchain with G-Cter in SUMO2). C2H2-type zinc fingers lie at residues 649–671, 677–699, 705–727, 733–755, 761–783, and 789–811; these read YVCPECGKAFIQKSHFIAHHRIH, YECSDCGKCFTKKSQLRVHQKIH, NICAECGKAFTDRSNLITHQKIH, YECGDCGKTFTWKSRLNIHQKSH, YECSKCGKAFIQKATLSMHQIIH, and YACTECQKAFTDRSNLIKHQKMH.

This sequence belongs to the krueppel C2H2-type zinc-finger protein family. As to expression, expressed in the heart, brain, placenta, lung, liver, skeletal muscle, kidney and pancreas.

It is found in the nucleus. In terms of biological role, may be involved in transcriptional regulation. This Homo sapiens (Human) protein is Zinc finger protein 41 (ZNF41).